A 435-amino-acid polypeptide reads, in one-letter code: Protein deadpan (435 aa).

Low complexity predominate over residues 18–27 (GYSDSYGSNG). Residues 18-48 (GYSDSYGSNGRMSNPNGLSKAELRKTNKPIM) are disordered. The bHLH domain maps to 40 to 97 (LRKTNKPIMEKRRRARINHCLNELKSLILEAMKKDPARHTKLEKADILEMTVKHLQSV). One can recognise an Orange domain in the interval 116–149 (FKTGFVECAEEVNRYVSQMDGIDTGVRQRLSAHL). Disordered regions lie at residues 305 to 334 (QLPV…AASP) and 349 to 416 (STPP…DEPS). Over residues 311–324 (STSPPLSPISSISS) the composition is skewed to low complexity. 2 stretches are compositionally biased toward polar residues: residues 355 to 378 (SAET…SSGC) and 385 to 395 (LQQQQVSSTSG). Phosphoserine occurs at positions 407, 408, and 411. The WRPW motif motif lies at 432-435 (WRPW).

As to quaternary structure, homodimer. Heterodimer with E(spl)mgamma-HLH and E(spl). Transcription repression requires formation of a complex with the corepressor protein Groucho. Interacts (via bHLH motif) with sisA. Interacts with da.

It is found in the nucleus. Functionally, transcriptional repressor of genes that require a bHLH protein for their transcription. In the larval brain, required to maintain the self-renewal and identity of type II neuroblasts by regulating the expression of the transcriptional repressor erm together with other self-renewal transcriptional repressors such as klu and E(spl)mgamma-HLH. As part of its role in neuroblasts development, has been shown to be a direct target of the Notch signaling pathway, however might work also independently of N/Notch. In the developing larval and pupal brain, required for mushroom body differentiation. Involved in sex determination and SXL transcription repression when in complex with the corepressor protein Groucho. The sequence is that of Protein deadpan (dpn) from Drosophila melanogaster (Fruit fly).